The following is a 475-amino-acid chain: Chromosomal replication initiator protein DnaA (475 aa).

Positions M1–E73 are domain I, interacts with DnaA modulators. The domain II stretch occupies residues E73 to S131. Positions P132 to S354 are domain III, AAA+ region. ATP contacts are provided by G179, G181, K182, and T183. Residues K355–D475 are domain IV, binds dsDNA.

Belongs to the DnaA family. In terms of assembly, oligomerizes as a right-handed, spiral filament on DNA at oriC.

Its subcellular location is the cytoplasm. Functionally, plays an essential role in the initiation and regulation of chromosomal replication. ATP-DnaA binds to the origin of replication (oriC) to initiate formation of the DNA replication initiation complex once per cell cycle. Binds the DnaA box (a 9 base pair repeat at the origin) and separates the double-stranded (ds)DNA. Forms a right-handed helical filament on oriC DNA; dsDNA binds to the exterior of the filament while single-stranded (ss)DNA is stabiized in the filament's interior. The ATP-DnaA-oriC complex binds and stabilizes one strand of the AT-rich DNA unwinding element (DUE), permitting loading of DNA polymerase. After initiation quickly degrades to an ADP-DnaA complex that is not apt for DNA replication. Binds acidic phospholipids. This Bradyrhizobium sp. (strain BTAi1 / ATCC BAA-1182) protein is Chromosomal replication initiator protein DnaA.